A 98-amino-acid chain; its full sequence is NADH-ubiquinone oxidoreductase chain 4L (98 aa).

3 helical membrane passes run 2-22 (PPIF…TLIF), 29-49 (SLLC…LIIL), and 61-81 (ILLL…LVMV).

It belongs to the complex I subunit 4L family. As to quaternary structure, core subunit of respiratory chain NADH dehydrogenase (Complex I) which is composed of 45 different subunits.

It localises to the mitochondrion inner membrane. It carries out the reaction a ubiquinone + NADH + 5 H(+)(in) = a ubiquinol + NAD(+) + 4 H(+)(out). Its function is as follows. Core subunit of the mitochondrial membrane respiratory chain NADH dehydrogenase (Complex I) which catalyzes electron transfer from NADH through the respiratory chain, using ubiquinone as an electron acceptor. Part of the enzyme membrane arm which is embedded in the lipid bilayer and involved in proton translocation. The sequence is that of NADH-ubiquinone oxidoreductase chain 4L (MT-ND4L) from Avahi occidentalis (Western woolly lemur).